The sequence spans 369 residues: uncharacterized protein (369 aa).

This sequence to A.pernix APE1276 and APE1804.

This is an uncharacterized protein from Saccharolobus solfataricus (strain ATCC 35092 / DSM 1617 / JCM 11322 / P2) (Sulfolobus solfataricus).